A 253-amino-acid chain; its full sequence is Triosephosphate isomerase (253 aa).

15 to 17 (NWK) contacts substrate. The active-site Electrophile is the His101. Glu171 serves as the catalytic Proton acceptor. Residues Gly177, Ser216, and 237–238 (GG) contribute to the substrate site.

Belongs to the triosephosphate isomerase family. As to quaternary structure, homodimer.

The protein localises to the cytoplasm. It carries out the reaction D-glyceraldehyde 3-phosphate = dihydroxyacetone phosphate. The protein operates within carbohydrate biosynthesis; gluconeogenesis. It participates in carbohydrate degradation; glycolysis; D-glyceraldehyde 3-phosphate from glycerone phosphate: step 1/1. Functionally, involved in the gluconeogenesis. Catalyzes stereospecifically the conversion of dihydroxyacetone phosphate (DHAP) to D-glyceraldehyde-3-phosphate (G3P). The chain is Triosephosphate isomerase from Caulobacter vibrioides (strain ATCC 19089 / CIP 103742 / CB 15) (Caulobacter crescentus).